We begin with the raw amino-acid sequence, 77 residues long: MLAPGQLERINFLANKAKTEGLSQDEMNEQQNLRQEYLKAFRQSFKSQMMGMKVVDPDGNDVTPEKLKEDQKRYRGE.

The disordered stretch occupies residues 53 to 77 (KVVDPDGNDVTPEKLKEDQKRYRGE). Over residues 63 to 77 (TPEKLKEDQKRYRGE) the composition is skewed to basic and acidic residues.

The protein belongs to the UPF0291 family.

It localises to the cytoplasm. This Exiguobacterium sp. (strain ATCC BAA-1283 / AT1b) protein is UPF0291 protein EAT1b_0405.